A 318-amino-acid chain; its full sequence is 4-hydroxy-3-methylbut-2-enyl diphosphate reductase (318 aa).

Cysteine 12 contacts [4Fe-4S] cluster. (2E)-4-hydroxy-3-methylbut-2-enyl diphosphate is bound by residues histidine 41 and histidine 74. Dimethylallyl diphosphate is bound by residues histidine 41 and histidine 74. Histidine 41 and histidine 74 together coordinate isopentenyl diphosphate. Cysteine 96 contributes to the [4Fe-4S] cluster binding site. Histidine 124 lines the (2E)-4-hydroxy-3-methylbut-2-enyl diphosphate pocket. Histidine 124 is a dimethylallyl diphosphate binding site. Histidine 124 is an isopentenyl diphosphate binding site. Glutamate 126 acts as the Proton donor in catalysis. Threonine 168 is a (2E)-4-hydroxy-3-methylbut-2-enyl diphosphate binding site. Cysteine 198 serves as a coordination point for [4Fe-4S] cluster. Serine 226, serine 227, asparagine 228, and serine 270 together coordinate (2E)-4-hydroxy-3-methylbut-2-enyl diphosphate. Positions 226, 227, 228, and 270 each coordinate dimethylallyl diphosphate. Positions 226, 227, 228, and 270 each coordinate isopentenyl diphosphate.

This sequence belongs to the IspH family. Requires [4Fe-4S] cluster as cofactor.

It catalyses the reaction isopentenyl diphosphate + 2 oxidized [2Fe-2S]-[ferredoxin] + H2O = (2E)-4-hydroxy-3-methylbut-2-enyl diphosphate + 2 reduced [2Fe-2S]-[ferredoxin] + 2 H(+). The catalysed reaction is dimethylallyl diphosphate + 2 oxidized [2Fe-2S]-[ferredoxin] + H2O = (2E)-4-hydroxy-3-methylbut-2-enyl diphosphate + 2 reduced [2Fe-2S]-[ferredoxin] + 2 H(+). The protein operates within isoprenoid biosynthesis; dimethylallyl diphosphate biosynthesis; dimethylallyl diphosphate from (2E)-4-hydroxy-3-methylbutenyl diphosphate: step 1/1. Its pathway is isoprenoid biosynthesis; isopentenyl diphosphate biosynthesis via DXP pathway; isopentenyl diphosphate from 1-deoxy-D-xylulose 5-phosphate: step 6/6. Functionally, catalyzes the conversion of 1-hydroxy-2-methyl-2-(E)-butenyl 4-diphosphate (HMBPP) into a mixture of isopentenyl diphosphate (IPP) and dimethylallyl diphosphate (DMAPP). Acts in the terminal step of the DOXP/MEP pathway for isoprenoid precursor biosynthesis. The protein is 4-hydroxy-3-methylbut-2-enyl diphosphate reductase of Psychrobacter arcticus (strain DSM 17307 / VKM B-2377 / 273-4).